Reading from the N-terminus, the 282-residue chain is 4-diphosphocytidyl-2-C-methyl-D-erythritol kinase (282 aa).

Lysine 9 is an active-site residue. 98–108 (PMGGGLGGGSS) is an ATP binding site. Aspartate 140 is a catalytic residue.

It belongs to the GHMP kinase family. IspE subfamily. Homodimer.

It catalyses the reaction 4-CDP-2-C-methyl-D-erythritol + ATP = 4-CDP-2-C-methyl-D-erythritol 2-phosphate + ADP + H(+). It participates in isoprenoid biosynthesis; isopentenyl diphosphate biosynthesis via DXP pathway; isopentenyl diphosphate from 1-deoxy-D-xylulose 5-phosphate: step 3/6. Catalyzes the phosphorylation of the position 2 hydroxy group of 4-diphosphocytidyl-2C-methyl-D-erythritol. This chain is 4-diphosphocytidyl-2-C-methyl-D-erythritol kinase, found in Salmonella schwarzengrund (strain CVM19633).